Here is a 161-residue protein sequence, read N- to C-terminus: Trivalent organoarsenical cleaving enzyme (161 aa).

One can recognise a VOC domain in the interval 2 to 119 (KYAHVGLNVT…DGNEWEFFYT (118 aa)). Positions 5 and 62 each coordinate Fe(2+). Residues cysteine 96 and cysteine 97 each coordinate roxarsone (III). Glutamate 115 is a Fe(2+) binding site.

The cofactor is Fe(2+).

It carries out the reaction methylarsonous acid + AH2 + O2 = arsenite + methanol + A + H(+). The enzyme catalyses roxarsone (III) + AH2 + O2 = 4-hydroxy-3-nitrocyclohexa-2,5-dien-1-one + arsenite + A + H(+). It catalyses the reaction nitarsone (III) + AH2 + O2 = 4-nitrocyclohexa-2,5-dien-1-one + arsenite + A + H(+). The catalysed reaction is 4-aminophenylarsonous acid + AH2 + O2 = 4-aminocyclohexa-2,5-dien-1-one + arsenite + A. With respect to regulation, inhibited in vitro by reagents that chemically modify histidine residues (diethylpyrocarbonate (DEPC)), aspartate or glutamate residues (1-ethyl-3-(3-(dimethylamino)propyl) carbodiimide (EDC)), or cysteine residues (N-ethylmaleimide (NEM) or iodoacetamide (IAA)). Nonheme iron-dependent dioxygenase that can break carbon-arsenic bonds, playing a role in the detoxification of environmental organoarsenical compounds. Catalyzes the oxygen-dependent demethylation of highly toxic methylarsonous acid (MAs(III)) to arsenite, which can then be exported out of the cell. Can also cleave the C-As bond in several trivalent aromatic arsenicals, including roxarsone (III), nitarsone (III) and (4-aminophenyl)arsonous acid. Organoarsenical degradation by this enzyme is proposed to have a significant impact on the arsenic biogeocycle that maintains a balance between organic and inorganic species. The chain is Trivalent organoarsenical cleaving enzyme from Bacillus sp. (strain MD1).